The chain runs to 359 residues: DNA polymerase IV (359 aa).

The 182-residue stretch at 4–185 (IIHIDMDCYF…LSLRKIPGVG (182 aa)) folds into the UmuC domain. Residues Asp8 and Asp103 each contribute to the Mg(2+) site. Glu104 is an active-site residue.

It belongs to the DNA polymerase type-Y family. Monomer. Requires Mg(2+) as cofactor.

The protein localises to the cytoplasm. The enzyme catalyses DNA(n) + a 2'-deoxyribonucleoside 5'-triphosphate = DNA(n+1) + diphosphate. Its function is as follows. Poorly processive, error-prone DNA polymerase involved in untargeted mutagenesis. Copies undamaged DNA at stalled replication forks, which arise in vivo from mismatched or misaligned primer ends. These misaligned primers can be extended by PolIV. Exhibits no 3'-5' exonuclease (proofreading) activity. May be involved in translesional synthesis, in conjunction with the beta clamp from PolIII. This chain is DNA polymerase IV, found in Shewanella sp. (strain MR-7).